The primary structure comprises 348 residues: 4-hydroxy-3-methylbut-2-enyl diphosphate reductase (348 aa).

Cys-21 lines the [4Fe-4S] cluster pocket. His-50 and His-86 together coordinate (2E)-4-hydroxy-3-methylbut-2-enyl diphosphate. Dimethylallyl diphosphate-binding residues include His-50 and His-86. His-50 and His-86 together coordinate isopentenyl diphosphate. Cys-108 lines the [4Fe-4S] cluster pocket. Position 136 (His-136) interacts with (2E)-4-hydroxy-3-methylbut-2-enyl diphosphate. His-136 contributes to the dimethylallyl diphosphate binding site. Position 136 (His-136) interacts with isopentenyl diphosphate. Glu-138 serves as the catalytic Proton donor. Thr-177 contributes to the (2E)-4-hydroxy-3-methylbut-2-enyl diphosphate binding site. Cys-207 contributes to the [4Fe-4S] cluster binding site. 4 residues coordinate (2E)-4-hydroxy-3-methylbut-2-enyl diphosphate: Ser-235, Ser-236, Asn-237, and Ser-280. Dimethylallyl diphosphate contacts are provided by Ser-235, Ser-236, Asn-237, and Ser-280. Ser-235, Ser-236, Asn-237, and Ser-280 together coordinate isopentenyl diphosphate.

Belongs to the IspH family. [4Fe-4S] cluster serves as cofactor.

It carries out the reaction isopentenyl diphosphate + 2 oxidized [2Fe-2S]-[ferredoxin] + H2O = (2E)-4-hydroxy-3-methylbut-2-enyl diphosphate + 2 reduced [2Fe-2S]-[ferredoxin] + 2 H(+). It catalyses the reaction dimethylallyl diphosphate + 2 oxidized [2Fe-2S]-[ferredoxin] + H2O = (2E)-4-hydroxy-3-methylbut-2-enyl diphosphate + 2 reduced [2Fe-2S]-[ferredoxin] + 2 H(+). It participates in isoprenoid biosynthesis; dimethylallyl diphosphate biosynthesis; dimethylallyl diphosphate from (2E)-4-hydroxy-3-methylbutenyl diphosphate: step 1/1. It functions in the pathway isoprenoid biosynthesis; isopentenyl diphosphate biosynthesis via DXP pathway; isopentenyl diphosphate from 1-deoxy-D-xylulose 5-phosphate: step 6/6. Its function is as follows. Catalyzes the conversion of 1-hydroxy-2-methyl-2-(E)-butenyl 4-diphosphate (HMBPP) into a mixture of isopentenyl diphosphate (IPP) and dimethylallyl diphosphate (DMAPP). Acts in the terminal step of the DOXP/MEP pathway for isoprenoid precursor biosynthesis. This is 4-hydroxy-3-methylbut-2-enyl diphosphate reductase from Agrobacterium fabrum (strain C58 / ATCC 33970) (Agrobacterium tumefaciens (strain C58)).